The following is a 692-amino-acid chain: Elongation factor G (692 aa).

The region spanning 8–283 is the tr-type G domain; it reads EMTRNIGIMA…AVLDYMPAPT (276 aa). GTP is bound by residues 17 to 24, 81 to 85, and 135 to 138; these read AHIDAGKT, DTPGH, and NKMD.

It belongs to the TRAFAC class translation factor GTPase superfamily. Classic translation factor GTPase family. EF-G/EF-2 subfamily.

The protein resides in the cytoplasm. Catalyzes the GTP-dependent ribosomal translocation step during translation elongation. During this step, the ribosome changes from the pre-translocational (PRE) to the post-translocational (POST) state as the newly formed A-site-bound peptidyl-tRNA and P-site-bound deacylated tRNA move to the P and E sites, respectively. Catalyzes the coordinated movement of the two tRNA molecules, the mRNA and conformational changes in the ribosome. The polypeptide is Elongation factor G (Citrifermentans bemidjiense (strain ATCC BAA-1014 / DSM 16622 / JCM 12645 / Bem) (Geobacter bemidjiensis)).